Consider the following 498-residue polypeptide: ATP synthase subunit beta, chloroplastic (498 aa).

Residue Gly172–Thr179 coordinates ATP.

Belongs to the ATPase alpha/beta chains family. As to quaternary structure, F-type ATPases have 2 components, CF(1) - the catalytic core - and CF(0) - the membrane proton channel. CF(1) has five subunits: alpha(3), beta(3), gamma(1), delta(1), epsilon(1). CF(0) has four main subunits: a(1), b(1), b'(1) and c(9-12).

It is found in the plastid. The protein localises to the chloroplast thylakoid membrane. It catalyses the reaction ATP + H2O + 4 H(+)(in) = ADP + phosphate + 5 H(+)(out). Functionally, produces ATP from ADP in the presence of a proton gradient across the membrane. The catalytic sites are hosted primarily by the beta subunits. The polypeptide is ATP synthase subunit beta, chloroplastic (Populus tremuloides (Quaking aspen)).